Here is a 261-residue protein sequence, read N- to C-terminus: MWFLILFLALSLGGIDAAPPVQSRIVGGFKCEKNSQPWHVAVYRYKEYICGGVLLDANWVLTAAHCYYEKNNVWLGKNNLYQDEPSAQHRLVSKSFLHPCYNMSLHRNRIQNPQDDYSYDLMLLRLSKPADITDVVKPIALPTEEPKLGSTCLASGWGSIIPVKFQYAKDLQCVNLKLLPNEDCDKAYVQKVTDVMLCAGVKGGGKDTCKGDSGGPLICDGVLQGLTSWGYNPCGEPKKPGVYTKLIKFTSWIKDTLAQNP.

Positions 1–18 are cleaved as a signal peptide; that stretch reads MWFLILFLALSLGGIDAA. Residues 19-24 constitute a propeptide, activation peptide; it reads PPVQSR. Residues 25-258 form the Peptidase S1 domain; the sequence is IVGGFKCEKN…FTSWIKDTLA (234 aa). Cystine bridges form between Cys31–Cys173, Cys50–Cys66, Cys152–Cys219, Cys184–Cys198, and Cys209–Cys234. His65 acts as the Charge relay system in catalysis. Asn102 carries N-linked (GlcNAc...) asparagine glycosylation. Asp120 serves as the catalytic Charge relay system. The Charge relay system role is filled by Ser213.

Belongs to the peptidase S1 family. Kallikrein subfamily.

The catalysed reaction is Preferential cleavage of Arg-|-Xaa bonds in small molecule substrates. Highly selective action to release kallidin (lysyl-bradykinin) from kininogen involves hydrolysis of Met-|-Xaa or Leu-|-Xaa.. Glandular kallikreins cleave Met-Lys and Arg-Ser bonds in kininogen to release Lys-bradykinin. This is Kallikrein 1-related peptidase b1 (Klk1b1) from Mus musculus (Mouse).